A 631-amino-acid chain; its full sequence is Probable glutamate--tRNA ligase, cytoplasmic (631 aa).

139 to 141 (RFP) contacts L-glutamate. The 'HIGH' region motif lies at 144 to 153 (PSGFLHIGHI). ATP is bound at residue His-149. L-glutamate contacts are provided by residues Asp-173, 311-315 (YDFAC), and Arg-329. ATP contacts are provided by residues Glu-332 and 367 to 371 (VLSKR). The 'KMSKS' region signature appears at 367 to 371 (VLSKR).

This sequence belongs to the class-I aminoacyl-tRNA synthetase family. Glutamate--tRNA ligase type 2 subfamily.

It localises to the cytoplasm. The enzyme catalyses tRNA(Glu) + L-glutamate + ATP = L-glutamyl-tRNA(Glu) + AMP + diphosphate. The sequence is that of Probable glutamate--tRNA ligase, cytoplasmic from Enterocytozoon bieneusi (strain H348) (Microsporidian parasite).